Consider the following 647-residue polypeptide: DNA mismatch repair protein MutL (647 aa).

The interval 377 to 396 (EEPQAVKQSAQLWQPPKQEW) is disordered. Residues 387 to 396 (QLWQPPKQEW) show a composition bias toward low complexity.

The protein belongs to the DNA mismatch repair MutL/HexB family.

Functionally, this protein is involved in the repair of mismatches in DNA. It is required for dam-dependent methyl-directed DNA mismatch repair. May act as a 'molecular matchmaker', a protein that promotes the formation of a stable complex between two or more DNA-binding proteins in an ATP-dependent manner without itself being part of a final effector complex. This chain is DNA mismatch repair protein MutL, found in Bacillus cereus (strain AH187).